Reading from the N-terminus, the 235-residue chain is Probable transcriptional regulatory protein JJD26997_0557 (235 aa).

This sequence belongs to the TACO1 family.

It localises to the cytoplasm. This Campylobacter jejuni subsp. doylei (strain ATCC BAA-1458 / RM4099 / 269.97) protein is Probable transcriptional regulatory protein JJD26997_0557.